We begin with the raw amino-acid sequence, 227 residues long: 2,3-bisphosphoglycerate-dependent phosphoglycerate mutase (227 aa).

Residues 7-14 (RHGFSEWN), 20-21 (TG), R59, 86-89 (ERHY), K97, 113-114 (RR), and 182-183 (GN) each bind substrate. The active-site Tele-phosphohistidine intermediate is the H8. The Proton donor/acceptor role is filled by E86.

It belongs to the phosphoglycerate mutase family. BPG-dependent PGAM subfamily. As to quaternary structure, homodimer.

The enzyme catalyses (2R)-2-phosphoglycerate = (2R)-3-phosphoglycerate. Its pathway is carbohydrate degradation; glycolysis; pyruvate from D-glyceraldehyde 3-phosphate: step 3/5. Its function is as follows. Catalyzes the interconversion of 2-phosphoglycerate and 3-phosphoglycerate. This is 2,3-bisphosphoglycerate-dependent phosphoglycerate mutase from Pasteurella multocida (strain Pm70).